The chain runs to 443 residues: Xaa-Pro dipeptidase (443 aa).

Mn(2+)-binding residues include Asp-246, Asp-257, His-339, Glu-384, and Glu-423.

Belongs to the peptidase M24B family. Bacterial-type prolidase subfamily. It depends on Mn(2+) as a cofactor.

It catalyses the reaction Xaa-L-Pro dipeptide + H2O = an L-alpha-amino acid + L-proline. In terms of biological role, splits dipeptides with a prolyl residue in the C-terminal position. This chain is Xaa-Pro dipeptidase, found in Shigella boydii serotype 18 (strain CDC 3083-94 / BS512).